Reading from the N-terminus, the 429-residue chain is Enolase (429 aa).

A (2R)-2-phosphoglycerate-binding site is contributed by Q163. E205 functions as the Proton donor in the catalytic mechanism. D242, E287, and D314 together coordinate Mg(2+). Residues K339, R368, S369, and K390 each coordinate (2R)-2-phosphoglycerate. Residue K339 is the Proton acceptor of the active site.

The protein belongs to the enolase family. It depends on Mg(2+) as a cofactor.

It localises to the cytoplasm. Its subcellular location is the secreted. The protein resides in the cell surface. The enzyme catalyses (2R)-2-phosphoglycerate = phosphoenolpyruvate + H2O. The protein operates within carbohydrate degradation; glycolysis; pyruvate from D-glyceraldehyde 3-phosphate: step 4/5. Its function is as follows. Catalyzes the reversible conversion of 2-phosphoglycerate (2-PG) into phosphoenolpyruvate (PEP). It is essential for the degradation of carbohydrates via glycolysis. This Cupriavidus pinatubonensis (strain JMP 134 / LMG 1197) (Cupriavidus necator (strain JMP 134)) protein is Enolase.